Reading from the N-terminus, the 66-residue chain is Pancreatic polypeptide prohormone (66 aa).

At Y36 the chain carries Tyrosine amide. A propeptide spanning residues E60–V66 is cleaved from the precursor.

The protein belongs to the NPY family.

It localises to the secreted. Functionally, hormone secreted by pancreatic cells that acts as a regulator of pancreatic and gastrointestinal functions probably by signaling through the G protein-coupled receptor NPY4R2. The chain is Pancreatic polypeptide prohormone (PPY) from Felis catus (Cat).